Consider the following 375-residue polypeptide: Putative disease resistance protein At3g15700 (375 aa).

A coiled-coil region spans residues 17–49 (KENDNVKKLKTATEELKDLRNIVMKRVKMYEDQ). An NB-ARC domain is found at 158-372 (DNTGIIGLYG…LSTSPPNFSG (215 aa)). 167–174 (GVEGVGKT) lines the ATP pocket.

Potential disease resistance protein. The polypeptide is Putative disease resistance protein At3g15700 (Arabidopsis thaliana (Mouse-ear cress)).